A 146-amino-acid polypeptide reads, in one-letter code: MDKLEMHHLIMAAKARKGLSWDDLANAVGKAPVWLASVCYGMNSAPLEVATHLCEVLELDDQVAATLTAFPVKGWDKSIPQDPLIYRLYEVVGVYGPPLKDVIQEKFGDGIMSAIDFSMHVERIEDPKGDRVLLTLNGKFLPYRSW.

Catalysis depends on residues R87, E90, and S113.

The protein belongs to the cyanase family.

The enzyme catalyses cyanate + hydrogencarbonate + 3 H(+) = NH4(+) + 2 CO2. Its function is as follows. Catalyzes the reaction of cyanate with bicarbonate to produce ammonia and carbon dioxide. This is Cyanate hydratase from Pseudomonas putida (strain ATCC 700007 / DSM 6899 / JCM 31910 / BCRC 17059 / LMG 24140 / F1).